The following is a 498-amino-acid chain: MRINPTTSGSGVSTLEKKNPGRVVQIIGPVLDVAFPPGKMPNIYNALVVQGRDSVGQPINVACEVQQLLGNNRVRAVAMSATEGLTRGMEVIDTGAPISVPVGGATLGRIFNVLGEPVDNLGPVDTSTTSPIHRSAPAFIQLDTKLSIFETGIKVVDLLAPYRRGGKIGLFGGAGVGKTVLIMELINNIAKAHGGVSVFGGVGERTREGNDLYMEMKESGVINEENIAESKVALVYGQMNEPPGARMRVGLTALTMAEYFRDVNEQDVLLFIDNIFRFVQAGSEVSALLGRMPSAVGYQPTLSTEMGSLQERITSTKEGSITSIQAVYVPADDLTDPAPATTFAHLDATTVLSRGLAAKGIYPAVDPLDSTSTMLQPRIVGEEHYETAQRVKQTLQRYKELQDIIAILGLDELSEEDRLLVARARKIERFLSQPFFVAEVFTGSPGKYVGLAETIRGFQLILSGELDGLPEQAFYLVGNIDEATAKAMNLEMESNLKK.

172-179 (GGAGVGKT) contributes to the ATP binding site.

This sequence belongs to the ATPase alpha/beta chains family. F-type ATPases have 2 components, CF(1) - the catalytic core - and CF(0) - the membrane proton channel. CF(1) has five subunits: alpha(3), beta(3), gamma(1), delta(1), epsilon(1). CF(0) has four main subunits: a(1), b(1), b'(1) and c(9-12).

The protein localises to the plastid. Its subcellular location is the chloroplast thylakoid membrane. The catalysed reaction is ATP + H2O + 4 H(+)(in) = ADP + phosphate + 5 H(+)(out). Functionally, produces ATP from ADP in the presence of a proton gradient across the membrane. The catalytic sites are hosted primarily by the beta subunits. The polypeptide is ATP synthase subunit beta, chloroplastic (Nicotiana sylvestris (Wood tobacco)).